The chain runs to 296 residues: MLADSSQPSSFHHVTVLQRELVEGLLPDRGGWFLDATLGGGGHSELLLSEWPNTQVIGLDRDPAAIAASQTRLQLYSDRVQFQHVNFANYQPGDRRFQGIMADLGVSSPQLDEAERGFSFRQDAPLDMRMDPTAELTAAAIVNEWDETDLANLIYQYGEERLSRRIARRIVEQRPFERTLELSEAIAGAVPRSYRYGRIHPATRTFQALRIAVNGELDALQTFLDRAPDWLAPGGRIALISFHSLEDRIIKHALRGDDRLTVITRKPLLPSEAEIESNPRSRSAKLRIAERVLPES.

S-adenosyl-L-methionine contacts are provided by residues 41-43, Asp-60, Phe-87, Asp-103, and Gln-110; that span reads GGH.

It belongs to the methyltransferase superfamily. RsmH family.

The protein resides in the cytoplasm. The catalysed reaction is cytidine(1402) in 16S rRNA + S-adenosyl-L-methionine = N(4)-methylcytidine(1402) in 16S rRNA + S-adenosyl-L-homocysteine + H(+). Functionally, specifically methylates the N4 position of cytidine in position 1402 (C1402) of 16S rRNA. In Synechococcus elongatus (strain ATCC 33912 / PCC 7942 / FACHB-805) (Anacystis nidulans R2), this protein is Ribosomal RNA small subunit methyltransferase H.